Here is a 367-residue protein sequence, read N- to C-terminus: Metacaspase-1 (367 aa).

The disordered stretch occupies residues 47-77 (DPRTAPPPQPSSAPSPPPQIHAPPGQLPHPH). Residues 50–73 (TAPPPQPSSAPSPPPQIHAPPGQL) show a composition bias toward pro residues. Residues H164 and C220 contribute to the active site.

The protein belongs to the peptidase C14B family. In terms of assembly, interacts (via N-terminus) with LSD1. Proteolytically processed; by an autocatalytic mechanism.

Cysteine protease that cleaves specifically after arginine or lysine residues. Does not cleave caspase-specific substrates. Acts as a positive regulator of cell death. Required for both oxidative stress cell death response and hypersensitive cell death response mediated by immune response. This Arabidopsis thaliana (Mouse-ear cress) protein is Metacaspase-1 (AMC1).